Consider the following 41-residue polypeptide: Large ribosomal subunit protein bL36 (41 aa).

It belongs to the bacterial ribosomal protein bL36 family.

The chain is Large ribosomal subunit protein bL36 from Rhodopseudomonas palustris (strain BisB5).